The primary structure comprises 105 residues: Small ribosomal subunit protein uS10 (105 aa).

The protein belongs to the universal ribosomal protein uS10 family. In terms of assembly, part of the 30S ribosomal subunit.

Its function is as follows. Involved in the binding of tRNA to the ribosomes. This chain is Small ribosomal subunit protein uS10, found in Synechocystis sp. (strain ATCC 27184 / PCC 6803 / Kazusa).